The chain runs to 391 residues: Methyltransferase/ribosomally synthesized type I borosin cyclic peptide precursor cmaMA (391 aa).

The methyltransferase domain stretch occupies residues 1–253 (MDATANPKAG…TISTFYLPPK (253 aa)). Residues Arg-72, Tyr-76, and Tyr-98 contribute to the active site. S-adenosyl-L-methionine contacts are provided by Tyr-98, His-100, Val-103, Ala-130, Gln-172, Ala-215, Ser-246, and Thr-247. Positions 254–373 (APSAKVSLNR…AQLSGALKEG (120 aa)) are clasp domain. A precursor leader region spans residues 374 to 376 (GVP). Leu-382 bears the N-methylleucine mark. Phe-385 and Phe-386 each carry N-methylphenylalanine. An N-methylisoleucine mark is found at Ile-387 and Ile-388.

In the N-terminal section; belongs to the precorrin methyltransferase family. In terms of assembly, homodimer. In terms of processing, cmaMA automethylates at Leu-382, Phe-385, Phe-386, Ile-387 and Ile-388 before being processed by the prolyloligopeptidase ledP which likely forms a peptidyl ester upon removal of the follower propeptide, which then undergoes macrocyclization with the N-terminus of the modified core peptide. Peptide backbone alpha-N-methylations change the physicochemical properties of amide bonds to provide structural constraints and other favorable characteristics including biological membrane permeability to peptides.

It participates in secondary metabolite biosynthesis. In terms of biological role, fusion protein of the methyltransferase cmaM and a type I borosin core peptide; part of the gene cluster that mediates the biosynthesis of a type I borosin, a highly methylated cyclic peptide with potent biological activities. Type I borosins derive from the C-terminus of the fusion protein, and it is the same protein that methylates its own C-terminus using S-adenosyl methionine (SAM). The C-terminus is subsequently cleaved off and macrocyclized by a prolyloligopeptidase to give the final product. In Coprinopsis marcescibilis (Agaric fungus), this protein is Methyltransferase/ribosomally synthesized type I borosin cyclic peptide precursor cmaMA.